The chain runs to 119 residues: Large ribosomal subunit protein bL20 (119 aa).

Belongs to the bacterial ribosomal protein bL20 family.

In terms of biological role, binds directly to 23S ribosomal RNA and is necessary for the in vitro assembly process of the 50S ribosomal subunit. It is not involved in the protein synthesizing functions of that subunit. The protein is Large ribosomal subunit protein bL20 of Rhodopseudomonas palustris (strain BisB18).